The chain runs to 394 residues: Protein-glutamate methylesterase/protein-glutamine glutaminase of group 2 operon (394 aa).

A Response regulatory domain is found at 21 to 139 (RVMVVDDSAV…ELTGADTFKR (119 aa)). A 4-aspartylphosphate modification is found at Asp72. Residues 148 to 201 (LGAAARRSGPRREGTAAARPPGAAAQPTSGYTLPSPVRAKPETGPLTVRPLPPD) are disordered. Residues 162–172 (TAAARPPGAAA) are compositionally biased toward low complexity. The CheB-type methylesterase domain occupies 200 to 382 (PDGRPDVIAI…SAILPLKEIG (183 aa)). Residues Ser212, His238, and Asp334 contribute to the active site.

It belongs to the CheB family. Phosphorylated by CheA. Phosphorylation of the N-terminal regulatory domain activates the methylesterase activity.

The protein resides in the cytoplasm. It catalyses the reaction [protein]-L-glutamate 5-O-methyl ester + H2O = L-glutamyl-[protein] + methanol + H(+). The enzyme catalyses L-glutaminyl-[protein] + H2O = L-glutamyl-[protein] + NH4(+). Its function is as follows. Involved in chemotaxis. Part of a chemotaxis signal transduction system that modulates chemotaxis in response to various stimuli. Catalyzes the demethylation of specific methylglutamate residues introduced into the chemoreceptors (methyl-accepting chemotaxis proteins or MCP) by CheR. Also mediates the irreversible deamidation of specific glutamine residues to glutamic acid. The polypeptide is Protein-glutamate methylesterase/protein-glutamine glutaminase of group 2 operon (Rhodospirillum centenum (strain ATCC 51521 / SW)).